Here is a 1616-residue protein sequence, read N- to C-terminus: MKSLLRKWNGMMIIALVISLLTPAWGKASAQSLGQESGGVQPQSAGVTDDVYVLSRDGTFRLPVGHINVNVDAPPQKTNYVALFTSGAQVTNSQETDKVFVKKTNTAIAVDKHDQVIRVIGPTAVPPTGSTWEENQNLPIPEGGYVLLANDSSWGTSVTRKPLFEHYKTGDTVSLHKGGQVVHAGDFLNPDPGLNLVTASGTTVTSPDFTVSGQVVRYGSGQGISLTVNGTEAALKADGAFQSAVRLTAGTNAISVKLLKDGREIVSSTVTVTYNDAQQPADLIEVEAAPIDITISIEGPAHAIGYVDQDIAGIDDTVALFTNDWGPQITVPQFNVAVQVDAGSKVTKVVNPSIDGKTPAWTGPTDLEIPSGGYVLVAQDTSYAGKNIKKYLATYFKVGDAIKLRKNGFAVPVKDLMGTGGPIARVTLDNYAMYTETKPSTELSGTITNMDDPSKIALTVNGTPLPFGPDGKFKTSYTLAEGINYLDLVVTKEGKEQDSKDLVVYSRPGFSTGKKVILWVDQAANARKFQTGDNVANFLRTAKENGVTSVVFDVKGVEGYVSYKKSTLTGRPYVSAIKAPEKAGSNPDLDLLQEFIRYSRELGLDIHVSFNIFAEGSIASNEFALLDSHLDWEERVYNAADNGQIKRLRESAKQGAVAFVNPSNDEVRDFQLKTIEEVLQNYDVDGVVLDRARYDNESADFSDLTKAKFESFLGARGKQLQNWPDDVFTYAGNVRKDGPLIRDWWEFRSKTIKSFTSEVRQLTDRVKAEKGKKIEVSAYVGSWFESYYLNGVHWGSTEFRYDERLRMKDKSVYTPGYYESGYVKNLDFIMIGAYQTTAPEIEHYITLGNIVTNGEVPLYAGIALTNVQEPALQRDVFQAGLVNTHGLMLFDASQVNWPVAGAALRNLVYVRDYQLGISLPDSPDSFLEGSYYNTNLIENNIGVLTDTFGYSTGNSRFGVEAVVDSSGKVTSVPNKTQAMTWNWGKPDETNSVIPKGGFVVSTLDASGIRTKRQLVANAYETGDSVRAAALSGFLAYEGLRTSADSVTFRGKVDVLGPGKASVTVNGQEAALREDGTFQADTVIRPGANPVVIIVRVDGFKTNEKTVTIIGDEAAVKALKLDRGTYSMNKGESLRLAVTAEYSSSSTDVTGQAAYASLDPAVVSVDATGRITALREGSGTVQATYEGHTATARVSVTSGSTGGGSDTGSGTGSGSGGGSAGGGGTAPSGPERTSVTETKDSDGRNLTLVSADAGVMEAEIAALQGKAAPVLSYEIPGEEPAGIVSLPGTALAKRFAGSPGAILSVSSHLGAIELPAGLLEADLPAVGSFDLLVQIGRTAADETADLRPGGERRHAGTRHAGCFPCFAENRRRNKRNRRLRKLRPKNRKLAGSGRPLTAPRRWSWTRPPECSASCPPASNRPGARRRPLSATEAGGPTRWSPPRSASPTLHPTGRARMSSCWPRSIVDGMGAGGFSPDEALTRAQFAALLTRALALDPAPAAADFTDIPGDAWYAGAVARRSGPARGRFRNRGVPTRRGADTRTDERDAHARREAGRYPDGGELRCRCAGALRGPGRNLRLGGRCRFAGGGSRPAGRTRGRTLRARPARLPVRKARPC.

Positions 1 to 30 are cleaved as a signal peptide; it reads MKSLLRKWNGMMIIALVISLLTPAWGKASA. Positions 1115 to 1185 constitute a BIG2 domain; the sequence is VKALKLDRGT…GSGTVQATYE (71 aa). Disordered regions lie at residues 1191 to 1244, 1372 to 1455, 1523 to 1554, and 1585 to 1616; these read ARVS…DGRN, NKRN…GRAR, ARGR…REAG, and FAGG…ARPC. The segment covering 1199–1225 has biased composition (gly residues); the sequence is STGGGSDTGSGTGSGSGGGSAGGGGTA. Residues 1372–1387 are compositionally biased toward basic residues; it reads NKRNRRLRKLRPKNRK. Residues 1406 to 1416 are compositionally biased toward low complexity; it reads PPECSASCPPA. The SLH domain occupies 1438-1502; it reads WSPPRSASPT…ALDPAPAAAD (65 aa). Over residues 1536 to 1554 the composition is skewed to basic and acidic residues; the sequence is RGADTRTDERDAHARREAG. The span at 1594–1616 shows a compositional bias: basic residues; it reads GRTRGRTLRARPARLPVRKARPC.

The protein resides in the secreted. It localises to the cell wall. It is found in the S-layer. In terms of biological role, the S-layer is a paracrystalline mono-layered assembly of proteins which coats the surface of bacteria. May play a role in the export of butirosin from the organism. This Niallia circulans (Bacillus circulans) protein is S-layer-related protein (butB).